A 161-amino-acid polypeptide reads, in one-letter code: Protein-export protein SecB (161 aa).

Belongs to the SecB family. Homotetramer, a dimer of dimers. One homotetramer interacts with 1 SecA dimer.

The protein resides in the cytoplasm. One of the proteins required for the normal export of preproteins out of the cell cytoplasm. It is a molecular chaperone that binds to a subset of precursor proteins, maintaining them in a translocation-competent state. It also specifically binds to its receptor SecA. The sequence is that of Protein-export protein SecB from Shewanella baltica (strain OS155 / ATCC BAA-1091).